Here is a 151-residue protein sequence, read N- to C-terminus: Internal scaffolding protein VP3 (151 aa).

Residues 120 to 151 are disordered; sequence VETPQQAPQSTTNQTTTKPAPASGEPTPVPTP. The span at 122–137 shows a compositional bias: polar residues; it reads TPQQAPQSTTNQTTTK.

The protein belongs to the microvidae B protein family.

The protein localises to the host cytoplasm. Its function is as follows. Participates in the assembly of the viral procapsid in the cytoplasm. Internal scaffolding protein VP3 is released from the procapsid upon genome packaging, possibly through affinity displacement by the protein VP8, or by proteolysis. The protein is Internal scaffolding protein VP3 of Bdellovibrio bacteriovorus (Bacteriophage phiMH2K).